The primary structure comprises 50 residues: Insulin (50 aa).

Disulfide bonds link cysteine 7–cysteine 36, cysteine 19–cysteine 49, and cysteine 35–cysteine 40.

This sequence belongs to the insulin family. Heterodimer of a B chain and an A chain linked by two disulfide bonds.

It is found in the secreted. In terms of biological role, insulin decreases blood glucose concentration. It increases cell permeability to monosaccharides, amino acids and fatty acids. It accelerates glycolysis, the pentose phosphate cycle, and glycogen synthesis in liver. This chain is Insulin (ins), found in Myoxocephalus scorpius (Shorthorn sculpin).